The primary structure comprises 141 residues: Holo-[acyl-carrier-protein] synthase (141 aa).

Aspartate 8 and glutamate 63 together coordinate Mg(2+).

The protein belongs to the P-Pant transferase superfamily. AcpS family. It depends on Mg(2+) as a cofactor.

It is found in the cytoplasm. The enzyme catalyses apo-[ACP] + CoA = holo-[ACP] + adenosine 3',5'-bisphosphate + H(+). In terms of biological role, transfers the 4'-phosphopantetheine moiety from coenzyme A to a Ser of acyl-carrier-protein. This chain is Holo-[acyl-carrier-protein] synthase, found in Rhodospirillum centenum (strain ATCC 51521 / SW).